The chain runs to 56 residues: uncharacterized protein (56 aa).

Residues 15-56 (SIGNISSGNINNSIGNSSSSGCDDVFNNSTNNNNNNNNNNNK) are disordered.

This is an uncharacterized protein from Dictyostelium discoideum (Social amoeba).